Reading from the N-terminus, the 338-residue chain is NAD kinase (338 aa).

Aspartate 66 serves as the catalytic Proton acceptor. NAD(+) contacts are provided by residues 66-67 (DG), arginine 71, 141-142 (ND), lysine 152, aspartate 171, 182-187 (TAYAFS), and alanine 206. Positions 317-338 (GDAGVAGTEPDKPGERDGKAGA) are disordered. The segment covering 325–338 (EPDKPGERDGKAGA) has biased composition (basic and acidic residues).

It belongs to the NAD kinase family. A divalent metal cation is required as a cofactor.

It is found in the cytoplasm. It catalyses the reaction NAD(+) + ATP = ADP + NADP(+) + H(+). In terms of biological role, involved in the regulation of the intracellular balance of NAD and NADP, and is a key enzyme in the biosynthesis of NADP. Catalyzes specifically the phosphorylation on 2'-hydroxyl of the adenosine moiety of NAD to yield NADP. The polypeptide is NAD kinase (Bifidobacterium longum subsp. infantis (strain ATCC 15697 / DSM 20088 / JCM 1222 / NCTC 11817 / S12)).